The following is a 530-amino-acid chain: Asc-type amino acid transporter 1 (530 aa).

Residues 1–36 are disordered; the sequence is MRRDSDMASHIQQPGGHGNPGPAPSPSPGPGPGPGA. Residues 21–33 show a composition bias toward pro residues; the sequence is GPAPSPSPGPGPG. 10 helical membrane-spanning segments follow: residues 46-66, 78-98, 119-139, 192-212, 274-294, 316-336, 368-388, 394-414, 430-450, and 454-474; these read IGLV…GIFI, VGLA…GSLC, IFGG…MYPT, IQVI…TVGF, AIFI…VAYF, LLGY…FGGI, CTPI…MLVG, INYV…GLLV, LLVP…SFIS, and VCGV…LGVF. The disordered stretch occupies residues 508–530; sequence EEENGPMGQPSPLPITDKPLKTQ.

It belongs to the amino acid-polyamine-organocation (APC) superfamily. Disulfide-linked heterodimer with the amino acid transport protein SLC3A2/4F2hc.

It is found in the cell membrane. The catalysed reaction is L-alanine(in) + glycine(out) = L-alanine(out) + glycine(in). It carries out the reaction L-serine(out) + L-alanine(in) = L-serine(in) + L-alanine(out). The enzyme catalyses L-threonine(out) + L-alanine(in) = L-threonine(in) + L-alanine(out). It catalyses the reaction L-cysteine(out) + L-alanine(in) = L-cysteine(in) + L-alanine(out). The catalysed reaction is 2-aminoisobutanoate(out) + L-alanine(in) = 2-aminoisobutanoate(in) + L-alanine(out). It carries out the reaction D-serine(out) + L-alanine(in) = D-serine(in) + L-alanine(out). The enzyme catalyses D-alanine(out) + L-alanine(in) = D-alanine(in) + L-alanine(out). It catalyses the reaction L-valine(out) + L-alanine(in) = L-valine(in) + L-alanine(out). The catalysed reaction is L-methionine(out) + L-alanine(in) = L-methionine(in) + L-alanine(out). It carries out the reaction beta-alanine(out) + L-alanine(in) = beta-alanine(in) + L-alanine(out). The enzyme catalyses D-cysteine(out) + L-alanine(in) = D-cysteine(in) + L-alanine(out). It catalyses the reaction D-threonine(out) + L-alanine(in) = D-threonine(in) + L-alanine(out). The catalysed reaction is D-isoleucine(out) + D-serine(in) = D-isoleucine(in) + D-serine(out). It carries out the reaction D-serine(in) = D-serine(out). Associates with SLC3A2/4F2hc to form a functional heterodimeric complex that translocates small neutral L- and D-amino acids across the plasma membrane. Preferentially mediates exchange transport, but can also operate via facilitated diffusion. Acts as a major transporter for glycine, L- and D-serine in the central nervous system. At the spinal cord and brainstem regulates glycine metabolism and glycinergic inhibitory neurotransmission by providing for glycine de novo synthesis from L-serine and glycine recycling from astrocytes to glycinergic motor neurons. At Schaffer collateral-CA1 synapses mediates D-serine and glycine release that modulates post-synaptic activation of NMDA receptors and excitatory glutamatergic transmission. May regulate D-serine release from mesenchymal progenitors located in developing subcutaneous adipose tissue, favoring white adipocyte over thermogenic beige adipocyte lineage commitment. The polypeptide is Asc-type amino acid transporter 1 (Slc7a10) (Rattus norvegicus (Rat)).